Reading from the N-terminus, the 89-residue chain is Cell division topological specificity factor (89 aa).

It belongs to the MinE family.

Functionally, prevents the cell division inhibition by proteins MinC and MinD at internal division sites while permitting inhibition at polar sites. This ensures cell division at the proper site by restricting the formation of a division septum at the midpoint of the long axis of the cell. The polypeptide is Cell division topological specificity factor (Pectobacterium carotovorum subsp. carotovorum (strain PC1)).